A 669-amino-acid polypeptide reads, in one-letter code: DNA ligase (669 aa).

NAD(+) contacts are provided by residues 34–38, 83–84, and glutamate 114; these read DAEYD and SL. Lysine 116 functions as the N6-AMP-lysine intermediate in the catalytic mechanism. Arginine 137, glutamate 171, lysine 287, and lysine 311 together coordinate NAD(+). Cysteine 405, cysteine 408, cysteine 423, and cysteine 428 together coordinate Zn(2+). A BRCT domain is found at 591-669; sequence NVESYFAGKT…EERFLQELNK (79 aa).

Belongs to the NAD-dependent DNA ligase family. LigA subfamily. It depends on Mg(2+) as a cofactor. Mn(2+) is required as a cofactor.

It carries out the reaction NAD(+) + (deoxyribonucleotide)n-3'-hydroxyl + 5'-phospho-(deoxyribonucleotide)m = (deoxyribonucleotide)n+m + AMP + beta-nicotinamide D-nucleotide.. In terms of biological role, DNA ligase that catalyzes the formation of phosphodiester linkages between 5'-phosphoryl and 3'-hydroxyl groups in double-stranded DNA using NAD as a coenzyme and as the energy source for the reaction. It is essential for DNA replication and repair of damaged DNA. The sequence is that of DNA ligase from Bacillus cereus (strain ZK / E33L).